The chain runs to 203 residues: MNKLREQTLALASILQTTTLIDQLASTGTCDANSNQASLKSIITSSTKLEEVFNQKQDLLVGIDALKVVLSNKTKCIQHIIFYALALINLEKKLMKNQTLLNQITLEIDLIRNQDFFEISHINSIARLAQLYKSTLGGLNPKIMINGQQIYLSNKHTSNHIRALLLAGIRAVSLWKSQGGKTWHLLLNKKKILNLINTLEGLN.

This sequence belongs to the HflD family.

The protein localises to the cytoplasm. It localises to the cell inner membrane. This chain is High frequency lysogenization protein HflD homolog, found in Vesicomyosocius okutanii subsp. Calyptogena okutanii (strain HA).